Consider the following 287-residue polypeptide: MAKGIREIRRSIKSKKDMRQITKAMKMVAAAKLRRNQDKAEAARPYADKIQEVIASIASGTSGSKHPMLQNRPVKKTGYIVITSDRGLAGGYNANILRKVVNTINEKHKSKDEYGIFVIGRKGRDFFSKRNYPLLDEVTGLPTSPAFADIKKIAGAAVQMFENEQIDELYLCYNKFQSAISQIPTVKQLLPLEAPESNNARAINYEYEPSSEEVLADLLPKYAETLVYSALLEAKASEEGSRMTAMGNATDNATDMINRLTLSYNRARQAAITQEISEIVAGANAQA.

Belongs to the ATPase gamma chain family. In terms of assembly, F-type ATPases have 2 components, CF(1) - the catalytic core - and CF(0) - the membrane proton channel. CF(1) has five subunits: alpha(3), beta(3), gamma(1), delta(1), epsilon(1). CF(0) has three main subunits: a, b and c.

The protein localises to the cell membrane. Produces ATP from ADP in the presence of a proton gradient across the membrane. The gamma chain is believed to be important in regulating ATPase activity and the flow of protons through the CF(0) complex. This Brevibacillus brevis (strain 47 / JCM 6285 / NBRC 100599) protein is ATP synthase gamma chain.